The primary structure comprises 335 residues: uncharacterized protein (335 aa).

4 helical membrane-spanning segments follow: residues 104–124 (FKKV…MGLL), 128–148 (LLQG…LSLF), 280–300 (LAFG…TMIG), and 310–330 (TINL…GIFV).

The protein resides in the cell membrane. This is an uncharacterized protein from Methanocaldococcus jannaschii (strain ATCC 43067 / DSM 2661 / JAL-1 / JCM 10045 / NBRC 100440) (Methanococcus jannaschii).